Consider the following 416-residue polypeptide: Multifunctional CCA protein (416 aa).

ATP is bound by residues Gly8 and Arg11. Gly8 and Arg11 together coordinate CTP. 2 residues coordinate Mg(2+): Asp21 and Asp23. Residues Arg91, Arg138, and Arg141 each contribute to the ATP site. 3 residues coordinate CTP: Arg91, Arg138, and Arg141. Positions 229 to 331 (TGLHQELVSD…YELLQRCDAF (103 aa)) constitute an HD domain.

This sequence belongs to the tRNA nucleotidyltransferase/poly(A) polymerase family. Bacterial CCA-adding enzyme type 1 subfamily. Monomer. Can also form homodimers and oligomers. Requires Mg(2+) as cofactor. Ni(2+) serves as cofactor.

It carries out the reaction a tRNA precursor + 2 CTP + ATP = a tRNA with a 3' CCA end + 3 diphosphate. The enzyme catalyses a tRNA with a 3' CCA end + 2 CTP + ATP = a tRNA with a 3' CCACCA end + 3 diphosphate. Catalyzes the addition and repair of the essential 3'-terminal CCA sequence in tRNAs without using a nucleic acid template. Adds these three nucleotides in the order of C, C, and A to the tRNA nucleotide-73, using CTP and ATP as substrates and producing inorganic pyrophosphate. tRNA 3'-terminal CCA addition is required both for tRNA processing and repair. Also involved in tRNA surveillance by mediating tandem CCA addition to generate a CCACCA at the 3' terminus of unstable tRNAs. While stable tRNAs receive only 3'-terminal CCA, unstable tRNAs are marked with CCACCA and rapidly degraded. This is Multifunctional CCA protein from Xylella fastidiosa (strain M23).